A 1124-amino-acid chain; its full sequence is Transient-receptor-potential-like protein (1124 aa).

Residues 1-24 (MGRKKKLPTGVSSGVSHASSAPKS) form a disordered region. Residues 1 to 340 (MGRKKKLPTG…GFRRKSIVDK (340 aa)) lie on the Cytoplasmic side of the membrane. Residues 10 to 21 (GVSSGVSHASSA) show a composition bias toward low complexity. ANK repeat units lie at residues 40–69 (LEEKKFLLAVERGDMPNVRRILQKALRHQH), 78–107 (LGRRALTLAIDNENLEMVELLVVMGVETKD), and 152–181 (PDITPLMLAAHKNNFEILRILLDRGAAVPV). The helical transmembrane segment at 341–361 (VICIAQVAVLFPLYCLIYMCA) threads the bilayer. Residues 362 to 373 (PNCRTGQLMRKP) lie on the Extracellular side of the membrane. A helical membrane pass occupies residues 374–394 (FMKFLIHASSYLFFLFILILV). At 395–431 (SQRADDDFVRIFGTTRMKKELAEQELRQRGQTPSKLE) the chain is on the cytoplasmic side. Residues 432–452 (LIVVMYVIGFVWEEVQEIFAV) form a helical membrane-spanning segment. At 453–512 (GMKSYLRNMWNFIDFLRNSLYVSVMCLRAFAYIQQATEIARDPQMAYIPREKWHDFDPQL) the chain is on the extracellular side. A helical transmembrane segment spans residues 513–533 (IAEGLFAAANVFSALKLVHLF). Residues 534-548 (SINPHLGPLQISLGR) are Cytoplasmic-facing. The helical transmembrane segment at 549-569 (MVIDIVKFFFIYTLVLFAFAC) threads the bilayer. The Extracellular portion of the chain corresponds to 570–645 (GLNQLLWYFA…GIKSYTRFWG (76 aa)). A helical transmembrane segment spans residues 646-666 (LLMFGSYSVINVIVLLNLLIA). Residues 667 to 1124 (MMSNSYAMID…TSPQRPKHRN (458 aa)) are Cytoplasmic-facing. Calmodulin-binding stretches follow at residues 710-728 (SVKWVIRIFRKSSKTIDRQ) and 853-895 (IPSK…SQIG). 2 disordered regions span residues 978 to 1013 (RAMAANNTRSLTAPELKISRKSSPAPTPTPTPGVSH) and 1031 to 1124 (LIAN…KHRN). The span at 1035 to 1063 (SAPSAPTAPPKKSAPTAPTPTYKPTTHAP) shows a compositional bias: low complexity. Basic and acidic residues-rich tracts occupy residues 1069-1081 (GNRENTRASDGVR) and 1090-1106 (HVVDLDEKGGHLGRDNV). Residues 1107–1118 (SDISSIASTSPQ) show a composition bias toward polar residues.

The protein belongs to the transient receptor (TC 1.A.4) family. STrpC subfamily. Forms heteromultimers with Trpgamma and, to a lower extent, with trp. Interacts with Fkbp59 in vivo and is found in the inaD signaling complex. As to expression, expressed predominantly in the rhabdomeres of photoreceptor cells.

The protein localises to the membrane. The protein resides in the cell projection. It localises to the rhabdomere membrane. Its function is as follows. A light-sensitive calcium channel that is required for inositide-mediated Ca(2+) entry in the retina during phospholipase C (PLC)-mediated phototransduction. Required for vision in the dark and in dim light. Binds calmodulin. Trp and trpl act together in the light response, although it is unclear whether as heteromultimers or distinct units. Also forms a functional cation channel with Trpgamma. Activated by fatty acids, metabolic stress, inositols and GTP-binding proteins. This Drosophila melanogaster (Fruit fly) protein is Transient-receptor-potential-like protein (trpl).